Reading from the N-terminus, the 152-residue chain is Large ribosomal subunit protein uL13 (152 aa).

It belongs to the universal ribosomal protein uL13 family. Part of the 50S ribosomal subunit.

Functionally, this protein is one of the early assembly proteins of the 50S ribosomal subunit, although it is not seen to bind rRNA by itself. It is important during the early stages of 50S assembly. The protein is Large ribosomal subunit protein uL13 of Borreliella afzelii (strain PKo) (Borrelia afzelii).